The primary structure comprises 464 residues: Light-independent protochlorophyllide reductase subunit N (464 aa).

[4Fe-4S] cluster is bound by residues Cys29, Cys54, and Cys114.

Belongs to the BchN/ChlN family. In terms of assembly, protochlorophyllide reductase is composed of three subunits; ChlL, ChlN and ChlB. Forms a heterotetramer of two ChlB and two ChlN subunits. [4Fe-4S] cluster serves as cofactor.

Its subcellular location is the plastid. It is found in the chloroplast. The catalysed reaction is chlorophyllide a + oxidized 2[4Fe-4S]-[ferredoxin] + 2 ADP + 2 phosphate = protochlorophyllide a + reduced 2[4Fe-4S]-[ferredoxin] + 2 ATP + 2 H2O. The protein operates within porphyrin-containing compound metabolism; chlorophyll biosynthesis (light-independent). Its function is as follows. Component of the dark-operative protochlorophyllide reductase (DPOR) that uses Mg-ATP and reduced ferredoxin to reduce ring D of protochlorophyllide (Pchlide) to form chlorophyllide a (Chlide). This reaction is light-independent. The NB-protein (ChlN-ChlB) is the catalytic component of the complex. In Stigeoclonium helveticum (Green alga), this protein is Light-independent protochlorophyllide reductase subunit N.